The sequence spans 191 residues: Holliday junction branch migration complex subunit RuvA (191 aa).

Positions 1–64 are domain I; that stretch reads MIGRLSGVLL…EDAHILFGFG (64 aa). A domain II region spans residues 65 to 137; that stretch reads TNEERNVFKQ…LKGKLGADLG (73 aa). The interval 137 to 141 is flexible linker; that stretch reads GVAGA. The tract at residues 142–191 is domain III; it reads VATDATSDILNALLALGYSDKEAMLALKQVPAGTGVSDGIKLALKSLSKA.

This sequence belongs to the RuvA family. Homotetramer. Forms an RuvA(8)-RuvB(12)-Holliday junction (HJ) complex. HJ DNA is sandwiched between 2 RuvA tetramers; dsDNA enters through RuvA and exits via RuvB. An RuvB hexamer assembles on each DNA strand where it exits the tetramer. Each RuvB hexamer is contacted by two RuvA subunits (via domain III) on 2 adjacent RuvB subunits; this complex drives branch migration. In the full resolvosome a probable DNA-RuvA(4)-RuvB(12)-RuvC(2) complex forms which resolves the HJ.

The protein localises to the cytoplasm. In terms of biological role, the RuvA-RuvB-RuvC complex processes Holliday junction (HJ) DNA during genetic recombination and DNA repair, while the RuvA-RuvB complex plays an important role in the rescue of blocked DNA replication forks via replication fork reversal (RFR). RuvA specifically binds to HJ cruciform DNA, conferring on it an open structure. The RuvB hexamer acts as an ATP-dependent pump, pulling dsDNA into and through the RuvAB complex. HJ branch migration allows RuvC to scan DNA until it finds its consensus sequence, where it cleaves and resolves the cruciform DNA. This chain is Holliday junction branch migration complex subunit RuvA, found in Janthinobacterium sp. (strain Marseille) (Minibacterium massiliensis).